We begin with the raw amino-acid sequence, 335 residues long: Dolichyl-diphosphooligosaccharide--protein glycosyltransferase subunit MAGT1 (335 aa).

Residues 1–29 form the signal peptide; it reads MAARWRFWCVSVTMVVALLIVCDVPSASA. The Extracellular portion of the chain corresponds to 30–184; the sequence is QRKKEMVLSE…DVNIRVIRPP (155 aa). The Thioredoxin domain occupies 47–175; the sequence is WTNKRPVIRM…IARWIADRTD (129 aa). Asn71 carries N-linked (GlcNAc...) asparagine glycosylation. Cys87 and Cys90 are disulfide-bonded. The chain crosses the membrane as a helical span at residues 185-205; it reads NYAGPLMLGLLLAVIGGLVYL. Residues 206-209 lie on the Cytoplasmic side of the membrane; it reads RRSN. A helical transmembrane segment spans residues 210-230; it reads MEFLFNKTGWAFAALCFVLAM. Topologically, residues 231–270 are extracellular; the sequence is TSGQMWNHIRGPPYAHKNPHTGHVNYIHGSSQAQFVAETH. Residues 271–291 form a helical membrane-spanning segment; the sequence is IVLLFNGGVTLGMVLLCEAAT. At 292-300 the chain is on the cytoplasmic side; the sequence is SDMDIGKRK. The helical transmembrane segment at 301 to 321 threads the bilayer; sequence IMCVAGIGLVVLFFSWMLSIF. Residues 322-335 are Extracellular-facing; that stretch reads RSKYHGYPYSFLMS.

Belongs to the OST3/OST6 family. As to quaternary structure, accessory component of the STT3B-containing form of the oligosaccharyltransferase (OST) complex. OST exists in two different complex forms which contain common core subunits RPN1, RPN2, OST48, OST4, DAD1 and TMEM258, either STT3A or STT3B as catalytic subunits, and form-specific accessory subunits. OST can form stable complexes with the Sec61 complex or with both the Sec61 and TRAP complexes. The association of TUSC3 or MAGT1 with the STT3B-containing complex seems to be mutually exclusvice. In terms of tissue distribution, ubiquitous. Expressed at very low levels in brain, lung and kidney.

Its subcellular location is the cell membrane. It localises to the endoplasmic reticulum. The protein localises to the endoplasmic reticulum membrane. It functions in the pathway protein modification; protein glycosylation. Accessory component of the STT3B-containing form of the N-oligosaccharyl transferase (OST) complex which catalyzes the transfer of a high mannose oligosaccharide from a lipid-linked oligosaccharide donor to an asparagine residue within an Asn-X-Ser/Thr consensus motif in nascent polypeptide chains. Involved in N-glycosylation of STT3B-dependent substrates. Specifically required for the glycosylation of a subset of acceptor sites that are near cysteine residues; in this function seems to act redundantly with TUSC3. In its oxidized form proposed to form transient mixed disulfides with a glycoprotein substrate to facilitate access of STT3B to the unmodified acceptor site. Also has oxidoreductase-independent functions in the STT3B-containing OST complex possibly involving substrate recognition. Could indirectly play a role in Mg(2+) transport in epithelial cells. The protein is Dolichyl-diphosphooligosaccharide--protein glycosyltransferase subunit MAGT1 of Homo sapiens (Human).